Here is a 360-residue protein sequence, read N- to C-terminus: Isocitrate dehydrogenase [NAD] subunit 1, mitochondrial (360 aa).

A mitochondrion-targeting transit peptide spans 1 to 11; that stretch reads MLNRTIAKRTL. The substrate site is built by R109, R140, and D228. D228 contacts Mg(2+).

Belongs to the isocitrate and isopropylmalate dehydrogenases family. As to quaternary structure, octamer of two non-identical subunits IDH1 and IDH2. Mg(2+) serves as cofactor. It depends on Mn(2+) as a cofactor.

It is found in the mitochondrion. It carries out the reaction D-threo-isocitrate + NAD(+) = 2-oxoglutarate + CO2 + NADH. With respect to regulation, allosterically regulated by several compounds including AMP, NAD(+), and citrate. Functionally, performs an essential role in the oxidative function of the citric acid cycle. Also binds RNA; specifically to the 5'-untranslated leaders of mitochondrial mRNAs. The polypeptide is Isocitrate dehydrogenase [NAD] subunit 1, mitochondrial (IDH1) (Saccharomyces cerevisiae (strain ATCC 204508 / S288c) (Baker's yeast)).